A 524-amino-acid polypeptide reads, in one-letter code: Ribose import ATP-binding protein RbsA (524 aa).

2 ABC transporter domains span residues 17 to 252 and 263 to 505; these read LQLD…GRSI and IGQP…VSQV. 49–56 serves as a coordination point for ATP; the sequence is GENGAGKS.

It belongs to the ABC transporter superfamily. Ribose importer (TC 3.A.1.2.1) family. The complex is composed of an ATP-binding protein (RbsA), two transmembrane proteins (RbsC) and a solute-binding protein (RbsB).

It is found in the cell membrane. It catalyses the reaction D-ribose(out) + ATP + H2O = D-ribose(in) + ADP + phosphate + H(+). Part of the ABC transporter complex RbsABC involved in ribose import. Responsible for energy coupling to the transport system. The protein is Ribose import ATP-binding protein RbsA of Corynebacterium glutamicum (strain ATCC 13032 / DSM 20300 / JCM 1318 / BCRC 11384 / CCUG 27702 / LMG 3730 / NBRC 12168 / NCIMB 10025 / NRRL B-2784 / 534).